The chain runs to 246 residues: tRNA (guanine-N(7)-)-methyltransferase (246 aa).

Residues Glu-77, Glu-102, Asp-129, and Asp-152 each contribute to the S-adenosyl-L-methionine site. Asp-152 is a catalytic residue. Substrate contacts are provided by residues Lys-156, Asp-188, and 225–228 (TKFE).

This sequence belongs to the class I-like SAM-binding methyltransferase superfamily. TrmB family.

It catalyses the reaction guanosine(46) in tRNA + S-adenosyl-L-methionine = N(7)-methylguanosine(46) in tRNA + S-adenosyl-L-homocysteine. Its pathway is tRNA modification; N(7)-methylguanine-tRNA biosynthesis. In terms of biological role, catalyzes the formation of N(7)-methylguanine at position 46 (m7G46) in tRNA. The protein is tRNA (guanine-N(7)-)-methyltransferase of Haemophilus influenzae (strain ATCC 51907 / DSM 11121 / KW20 / Rd).